The primary structure comprises 302 residues: Protein transport protein SEC13 homolog A (302 aa).

WD repeat units lie at residues 9 to 48 (GHSDTIHDVVMDYYGKRVATASSDCTIKITGVSNSGGSQH), 54 to 95 (GHRG…QWTQ), 101 to 142 (DHKV…GWDT), 148 to 201 (AHPV…WKMD), 208 to 251 (KHTD…EQWE), and 257 to 296 (DFKTPVWRVSWSLTGNLLAVSDGNNNVTVWKESVDGEWEQ).

Belongs to the WD repeat SEC13 family. As to quaternary structure, interacts with MAG5, SEC31A and SEC31B.

Its subcellular location is the golgi apparatus. The protein resides in the endoplasmic reticulum. Required for protein transport from the endoplasmic reticulum to the Golgi apparatus. This chain is Protein transport protein SEC13 homolog A, found in Arabidopsis thaliana (Mouse-ear cress).